Reading from the N-terminus, the 351-residue chain is Tetraacyldisaccharide 4'-kinase (351 aa).

ATP is bound at residue Thr61–Thr68.

Belongs to the LpxK family.

It carries out the reaction a lipid A disaccharide + ATP = a lipid IVA + ADP + H(+). The protein operates within glycolipid biosynthesis; lipid IV(A) biosynthesis; lipid IV(A) from (3R)-3-hydroxytetradecanoyl-[acyl-carrier-protein] and UDP-N-acetyl-alpha-D-glucosamine: step 6/6. Functionally, transfers the gamma-phosphate of ATP to the 4'-position of a tetraacyldisaccharide 1-phosphate intermediate (termed DS-1-P) to form tetraacyldisaccharide 1,4'-bis-phosphate (lipid IVA). The polypeptide is Tetraacyldisaccharide 4'-kinase (Xanthomonas campestris pv. campestris (strain 8004)).